Reading from the N-terminus, the 71-residue chain is Conotoxin TxMMSK-05 (71 aa).

Positions 1–20 (MMSKLGALLIICLLLFPLTA) are cleaved as a signal peptide. A propeptide spanning residues 21–52 (VPLDGDQHADRPAERLQDDISSKHHPMFDAVR) is cleaved from the precursor. 3 disulfides stabilise this stretch: cysteine 54–cysteine 70, cysteine 55–cysteine 66, and cysteine 60–cysteine 69.

The protein belongs to the conotoxin M superfamily. Expressed by the venom duct.

The protein localises to the secreted. In Conus textile (Cloth-of-gold cone), this protein is Conotoxin TxMMSK-05.